The sequence spans 297 residues: 33 kDa chaperonin (297 aa).

2 disulfides stabilise this stretch: Cys-233/Cys-235 and Cys-267/Cys-270.

It belongs to the HSP33 family. Under oxidizing conditions two disulfide bonds are formed involving the reactive cysteines. Under reducing conditions zinc is bound to the reactive cysteines and the protein is inactive.

Its subcellular location is the cytoplasm. Redox regulated molecular chaperone. Protects both thermally unfolding and oxidatively damaged proteins from irreversible aggregation. Plays an important role in the bacterial defense system toward oxidative stress. The chain is 33 kDa chaperonin from Haemophilus ducreyi (strain 35000HP / ATCC 700724).